Here is a 452-residue protein sequence, read N- to C-terminus: tRNA-2-methylthio-N(6)-dimethylallyladenosine synthase (452 aa).

Positions 16–134 (KRFFISTWGC…LPEYIERVKT (119 aa)) constitute an MTTase N-terminal domain. 6 residues coordinate [4Fe-4S] cluster: C25, C61, C95, C171, C175, and C178. The Radical SAM core domain occupies 157–387 (RKSDIKAFVT…VEAVNEIMAR (231 aa)). The 63-residue stretch at 390-452 (KEFEGKTVEV…NSFSLTGEII (63 aa)) folds into the TRAM domain.

It belongs to the methylthiotransferase family. MiaB subfamily. Monomer. Requires [4Fe-4S] cluster as cofactor.

Its subcellular location is the cytoplasm. The enzyme catalyses N(6)-dimethylallyladenosine(37) in tRNA + (sulfur carrier)-SH + AH2 + 2 S-adenosyl-L-methionine = 2-methylsulfanyl-N(6)-dimethylallyladenosine(37) in tRNA + (sulfur carrier)-H + 5'-deoxyadenosine + L-methionine + A + S-adenosyl-L-homocysteine + 2 H(+). Its function is as follows. Catalyzes the methylthiolation of N6-(dimethylallyl)adenosine (i(6)A), leading to the formation of 2-methylthio-N6-(dimethylallyl)adenosine (ms(2)i(6)A) at position 37 in tRNAs that read codons beginning with uridine. This chain is tRNA-2-methylthio-N(6)-dimethylallyladenosine synthase, found in Clostridium novyi (strain NT).